The sequence spans 456 residues: Rap guanine nucleotide exchange factor-like 1 (456 aa).

One can recognise a Ras-GEF domain in the interval 218–454; it reads EPEDVANHLT…FELSYKLEAN (237 aa).

Probable guanine nucleotide exchange factor (GEF). This Pongo pygmaeus (Bornean orangutan) protein is Rap guanine nucleotide exchange factor-like 1 (RAPGEFL1).